A 71-amino-acid chain; its full sequence is MKTLCSLLLIGCLLFSYDTPVVGELKHLGMTAETEWCRLFEGFCHDKNCPPPTSHVGSCHPEKRSCCKDRR.

The signal sequence occupies residues 1 to 23 (MKTLCSLLLIGCLLFSYDTPVVG). 3 disulfide bridges follow: Cys-37-Cys-66, Cys-44-Cys-59, and Cys-49-Cys-67.

The protein belongs to the beta-defensin family.

The protein resides in the secreted. In terms of biological role, has antibacterial activity. The sequence is that of Beta-defensin 10 (Defb10) from Rattus norvegicus (Rat).